Here is a 458-residue protein sequence, read N- to C-terminus: BUD13 homolog (458 aa).

Disordered stretches follow at residues 16-37 (SGDI…SGLR), 81-328 (KQTF…TEEL), and 437-458 (AKTE…AEYE). Residues 138 to 148 (NRHDSDKDNSP) show a composition bias toward basic and acidic residues. Basic residues-rich tracts occupy residues 175–185 (RNRRSPPRTRR) and 208–218 (PRRRPSSPARR). Basic and acidic residues-rich tracts occupy residues 219-243 (RKDD…KKEE), 266-284 (RDLK…KMFE), and 314-328 (DQAK…TEEL). The stretch at 262-356 (LQSARDLKEE…AQLEEMARVA (95 aa)) forms a coiled coil.

The protein belongs to the CWC26 family.

The protein is BUD13 homolog of Caenorhabditis elegans.